The sequence spans 973 residues: UvrABC system protein A (973 aa).

An ATP-binding site is contributed by 34–41 (GLSGSGKS). ABC transporter domains are found at residues 331–609 (WAKS…PKSL) and 629–958 (PKKG…HFLK). Position 662 to 669 (662 to 669 (GVSGGGKS)) interacts with ATP. A C4-type zinc finger spans residues 761–787 (CEACQGDGVIKIEMHFLPDVYVTCDVC).

This sequence belongs to the ABC transporter superfamily. UvrA family. In terms of assembly, forms a heterotetramer with UvrB during the search for lesions.

The protein localises to the cytoplasm. Functionally, the UvrABC repair system catalyzes the recognition and processing of DNA lesions. UvrA is an ATPase and a DNA-binding protein. A damage recognition complex composed of 2 UvrA and 2 UvrB subunits scans DNA for abnormalities. When the presence of a lesion has been verified by UvrB, the UvrA molecules dissociate. This is UvrABC system protein A from Agrobacterium fabrum (strain C58 / ATCC 33970) (Agrobacterium tumefaciens (strain C58)).